Reading from the N-terminus, the 425-residue chain is Serine hydroxymethyltransferase (425 aa).

(6S)-5,6,7,8-tetrahydrofolate is bound by residues Leu128 and 132–134 (GHL). Lys237 carries the post-translational modification N6-(pyridoxal phosphate)lysine.

This sequence belongs to the SHMT family. As to quaternary structure, homodimer. Pyridoxal 5'-phosphate is required as a cofactor.

It localises to the cytoplasm. The catalysed reaction is (6R)-5,10-methylene-5,6,7,8-tetrahydrofolate + glycine + H2O = (6S)-5,6,7,8-tetrahydrofolate + L-serine. The protein operates within one-carbon metabolism; tetrahydrofolate interconversion. It functions in the pathway amino-acid biosynthesis; glycine biosynthesis; glycine from L-serine: step 1/1. Catalyzes the reversible interconversion of serine and glycine with tetrahydrofolate (THF) serving as the one-carbon carrier. This reaction serves as the major source of one-carbon groups required for the biosynthesis of purines, thymidylate, methionine, and other important biomolecules. Also exhibits THF-independent aldolase activity toward beta-hydroxyamino acids, producing glycine and aldehydes, via a retro-aldol mechanism. The chain is Serine hydroxymethyltransferase from Wolbachia pipientis subsp. Culex pipiens (strain wPip).